Consider the following 115-residue polypeptide: Large ribosomal subunit protein uL22 (115 aa).

The protein belongs to the universal ribosomal protein uL22 family. In terms of assembly, part of the 50S ribosomal subunit.

In terms of biological role, this protein binds specifically to 23S rRNA; its binding is stimulated by other ribosomal proteins, e.g. L4, L17, and L20. It is important during the early stages of 50S assembly. It makes multiple contacts with different domains of the 23S rRNA in the assembled 50S subunit and ribosome. Its function is as follows. The globular domain of the protein is located near the polypeptide exit tunnel on the outside of the subunit, while an extended beta-hairpin is found that lines the wall of the exit tunnel in the center of the 70S ribosome. This chain is Large ribosomal subunit protein uL22, found in Ligilactobacillus salivarius (strain UCC118) (Lactobacillus salivarius).